Consider the following 1165-residue polypeptide: Valine--tRNA ligase (1165 aa).

The short motif at 43 to 53 (PNVTGSLHMGH) is the 'HIGH' region element. Positions 800-804 (KMSKT) match the 'KMSKS' region motif. Position 803 (lysine 803) interacts with ATP. 2 coiled-coil regions span residues 1001–1032 (KNED…SDLQ) and 1097–1165 (HVDL…VLRS).

The protein belongs to the class-I aminoacyl-tRNA synthetase family. ValS type 1 subfamily. As to quaternary structure, monomer.

The protein localises to the cytoplasm. It carries out the reaction tRNA(Val) + L-valine + ATP = L-valyl-tRNA(Val) + AMP + diphosphate. Catalyzes the attachment of valine to tRNA(Val). As ValRS can inadvertently accommodate and process structurally similar amino acids such as threonine, to avoid such errors, it has a 'posttransfer' editing activity that hydrolyzes mischarged Thr-tRNA(Val) in a tRNA-dependent manner. The chain is Valine--tRNA ligase from Aquifex aeolicus (strain VF5).